A 212-amino-acid chain; its full sequence is NAD(P)H dehydrogenase (quinone) 3 (212 aa).

Positions 4–192 (MLVLYYSSYG…DGARFQGRHV (189 aa)) constitute a Flavodoxin-like domain. FMN contacts are provided by residues 10 to 15 (SSYGHI) and 78 to 80 (TRF). An NAD(+)-binding site is contributed by Tyr12. Trp98 serves as a coordination point for substrate. Residues 113–119 (STGSQHG) and His134 each bind FMN. Residues 161–182 (YGASTLAEDENHRDRSPSANEL) are disordered.

The protein belongs to the WrbA family. Requires FMN as cofactor.

It catalyses the reaction a quinone + NADH + H(+) = a quinol + NAD(+). The enzyme catalyses a quinone + NADPH + H(+) = a quinol + NADP(+). The chain is NAD(P)H dehydrogenase (quinone) 3 from Rhizobium meliloti (strain 1021) (Ensifer meliloti).